We begin with the raw amino-acid sequence, 250 residues long: Trypsin (250 aa).

Residues 1-15 form the signal peptide; that stretch reads MRLLALLLMVGAAVA. A propeptide spans 16–22 (activation peptide); sequence VPREDGR. A Peptidase S1 domain is found at 23–247; the sequence is IIGGHECAAH…FLGWIERTLE (225 aa). Intrachain disulfides connect cysteine 29-cysteine 163, cysteine 47-cysteine 63, cysteine 133-cysteine 236, cysteine 140-cysteine 209, cysteine 174-cysteine 188, and cysteine 199-cysteine 223. Residues histidine 62 and aspartate 106 each act as charge relay system in the active site. Serine 203 acts as the Charge relay system in catalysis.

This sequence belongs to the peptidase S1 family.

The protein localises to the secreted. It is found in the extracellular space. The enzyme catalyses Preferential cleavage: Arg-|-Xaa, Lys-|-Xaa.. This chain is Trypsin, found in Pleuronectes platessa (European plaice).